Reading from the N-terminus, the 363-residue chain is Aminomethyltransferase (363 aa).

This sequence belongs to the GcvT family. The glycine cleavage system is composed of four proteins: P, T, L and H.

The catalysed reaction is N(6)-[(R)-S(8)-aminomethyldihydrolipoyl]-L-lysyl-[protein] + (6S)-5,6,7,8-tetrahydrofolate = N(6)-[(R)-dihydrolipoyl]-L-lysyl-[protein] + (6R)-5,10-methylene-5,6,7,8-tetrahydrofolate + NH4(+). Its function is as follows. The glycine cleavage system catalyzes the degradation of glycine. The chain is Aminomethyltransferase from Saccharophagus degradans (strain 2-40 / ATCC 43961 / DSM 17024).